A 748-amino-acid chain; its full sequence is Wings apart-like protein homolog 1 (748 aa).

Disordered regions lie at residues 23–199 (TLAQ…VYAT) and 614–644 (EGGC…RLDR). Residues 35–64 (PSVRSSDSPDVPDTPDVPVNQLSSPPLSLP) are compositionally biased toward low complexity. Polar residues-rich tracts occupy residues 68-79 (SEGNAETLQNLS) and 87-96 (LSQSSTSSLN). Positions 172–182 (ISSSSNRYSSR) are enriched in low complexity. The WAPL domain maps to 205 to 723 (KPLASGYGSR…KRLYDFTKAT (519 aa)). A compositionally biased stretch (acidic residues) spans 616-633 (GCGDEEEEEEGGDESSDE). Residues 634 to 644 (DGVRKDGRLDR) are compositionally biased toward basic and acidic residues.

The protein belongs to the WAPL family.

The protein localises to the nucleus. Its function is as follows. Regulator of meiotic chromosome structure and function, playing a role in sister chromatid cohesion, possibly via antagonizing the coh-3/-4 association with axial elements in nuclei during late prophase, cohesin association with chromatin, DNA double strand break repair and polar body positioning following meiotic divisions during oogenesis. Regulates the morphogenesis and temporal assembly of axial elements to control the organization of meiotic chromosomes in pachytene nuclei and is also involved in meiotic chromosomal remodeling in late pachytene nuclei. Required for the removal of the cohesin component scc-1 from mitotic chromosomes. This Caenorhabditis elegans protein is Wings apart-like protein homolog 1.